A 222-amino-acid chain; its full sequence is Urease accessory protein UreF (222 aa).

The protein belongs to the UreF family. As to quaternary structure, ureD, UreF and UreG form a complex that acts as a GTP-hydrolysis-dependent molecular chaperone, activating the urease apoprotein by helping to assemble the nickel containing metallocenter of UreC. The UreE protein probably delivers the nickel.

Its subcellular location is the cytoplasm. In terms of biological role, required for maturation of urease via the functional incorporation of the urease nickel metallocenter. The protein is Urease accessory protein UreF of Roseobacter denitrificans (strain ATCC 33942 / OCh 114) (Erythrobacter sp. (strain OCh 114)).